Reading from the N-terminus, the 225-residue chain is Small ribosomal subunit protein uS3 (225 aa).

The 69-residue stretch at 38–106 folds into the KH type-2 domain; the sequence is LRAHLRRKLS…DVALNIVEIR (69 aa).

This sequence belongs to the universal ribosomal protein uS3 family. In terms of assembly, part of the 30S ribosomal subunit. Forms a tight complex with proteins S10 and S14.

Its function is as follows. Binds the lower part of the 30S subunit head. Binds mRNA in the 70S ribosome, positioning it for translation. The chain is Small ribosomal subunit protein uS3 from Gluconacetobacter diazotrophicus (strain ATCC 49037 / DSM 5601 / CCUG 37298 / CIP 103539 / LMG 7603 / PAl5).